The sequence spans 582 residues: Threonine--tRNA ligase (582 aa).

The segment at 185 to 478 is catalytic; that stretch reads DHRKLGKELE…LTEQYGGAFP (294 aa). Zn(2+) contacts are provided by Cys278, His329, and His455.

Belongs to the class-II aminoacyl-tRNA synthetase family. As to quaternary structure, homodimer. It depends on Zn(2+) as a cofactor.

The protein resides in the cytoplasm. It catalyses the reaction tRNA(Thr) + L-threonine + ATP = L-threonyl-tRNA(Thr) + AMP + diphosphate + H(+). Functionally, catalyzes the attachment of threonine to tRNA(Thr) in a two-step reaction: L-threonine is first activated by ATP to form Thr-AMP and then transferred to the acceptor end of tRNA(Thr). Also edits incorrectly charged L-seryl-tRNA(Thr). This chain is Threonine--tRNA ligase, found in Dehalococcoides mccartyi (strain CBDB1).